The chain runs to 466 residues: MGKLLYHKIYDSHVIHEDTNDDPILYIDRHLLHEVTSPQAFESIRFKNRKIRRPNKTFATMDHNVPTIMQNIHSIEGMSKIQLNQLTKNCKDFNITLFDLSHPHQGIIHVLAPEQGIILPGMTVVCGDSHTSTHGAFGALSFGIGTSEIEHVLVTQTLRQPKYKSMGINLFGTIPPYITAKDLILFIIGKIGHGGASGYIVEFYGDVINTLSMEERMTICNMSIEMGAASALIAPDVTTYNYLKNKKFSPNKTHWNQALLFWNTLHSDHDTNFDKIFNFDISNIKPQITWGTNPSQVISIDQPIPKLEIFTDPIERKSVIQALNYMKLTPNTYLTNISIDKVFIGSCTNSRIEDLRSAANIIKDHKISNNVHAIVVPGSKPVKKQAEKEGLDSIFIKAGFEWRLPGCSMCLGMNEDRLNAGERCASTSNRNFEGRQGRGGLTHLVSPAMAAAAAIAGHFVDIRTYF.

[4Fe-4S] cluster-binding residues include Cys347, Cys407, and Cys410.

It belongs to the aconitase/IPM isomerase family. LeuC type 1 subfamily. In terms of assembly, heterodimer of LeuC and LeuD. It depends on [4Fe-4S] cluster as a cofactor.

The catalysed reaction is (2R,3S)-3-isopropylmalate = (2S)-2-isopropylmalate. It participates in amino-acid biosynthesis; L-leucine biosynthesis; L-leucine from 3-methyl-2-oxobutanoate: step 2/4. In terms of biological role, catalyzes the isomerization between 2-isopropylmalate and 3-isopropylmalate, via the formation of 2-isopropylmaleate. The protein is 3-isopropylmalate dehydratase large subunit of Blochmanniella floridana.